The sequence spans 283 residues: NAD kinase (283 aa).

Asp-67 functions as the Proton acceptor in the catalytic mechanism. NAD(+) contacts are provided by residues 67–68 (DG), 141–142 (ND), Arg-152, Asp-171, 182–187 (TAYSLS), and Gln-241.

This sequence belongs to the NAD kinase family. It depends on a divalent metal cation as a cofactor.

The protein resides in the cytoplasm. It carries out the reaction NAD(+) + ATP = ADP + NADP(+) + H(+). Its function is as follows. Involved in the regulation of the intracellular balance of NAD and NADP, and is a key enzyme in the biosynthesis of NADP. Catalyzes specifically the phosphorylation on 2'-hydroxyl of the adenosine moiety of NAD to yield NADP. The protein is NAD kinase of Heliobacterium modesticaldum (strain ATCC 51547 / Ice1).